Here is a 118-residue protein sequence, read N- to C-terminus: Large ribosomal subunit protein uL18 (118 aa).

Belongs to the universal ribosomal protein uL18 family. In terms of assembly, part of the 50S ribosomal subunit; part of the 5S rRNA/L5/L18/L25 subcomplex. Contacts the 5S and 23S rRNAs.

Its function is as follows. This is one of the proteins that bind and probably mediate the attachment of the 5S RNA into the large ribosomal subunit, where it forms part of the central protuberance. The chain is Large ribosomal subunit protein uL18 from Wolinella succinogenes (strain ATCC 29543 / DSM 1740 / CCUG 13145 / JCM 31913 / LMG 7466 / NCTC 11488 / FDC 602W) (Vibrio succinogenes).